We begin with the raw amino-acid sequence, 756 residues long: IDESQTSLDTGVQRFTSSKIASSVQCFEDTKARIVKLIHKPELSVSTYDTAWVAMVPSPNSSNEPCFPDCLAWLLENQCCDGSWACPHHHPFLKKDVLSSTLACILALKKWGVGEEQINKGARFIEVNFASATEKSQISPTGFDIIFPAMLDYARDLFLDLRLEPTTFDNLIFRRDLELKRCYESHREAYLAYIAEGMGKLQDWESVMKYQRKNGSLFNSPSTTAAAFIALPNSGCLSYLHSALKKFGNAVPAAYPLDVYSRLRTVDNLESLGISRYFQKEIQQVLDETYRWWLQGSEEIFLDASTCALAFRTLRMNGYNVTSDAITKLLPDSFCGNMKDIGTTLELYRASEFILYPDEKDLEQQNLRLKDILEQELSSGFIHSEVNRALNYPFYAIMDRVAKRRNIEHYNFDNTRILKTSYCSPNFANKDFLFLSVEDFNNCQAMHREELKGKMRWVTENRLDELKFARSKSAYCYFSAAATFFAPDLSDARMSWAKNGVLTTVVDDFFDVGGSEEELKQLIRLVEIWDLDAITECSSQNVQIIFSSLKRTISEIGDKGFKLQGRSVTNHIIEIWLDLLYSMMKEAEWARDNHAPPMDDYISNAYVSFALGPIVLPCLYLVGPKLSEEMVRHSECHTLFRLMSTCGRLLNDIQTCERELKDGKLNAIPLYMINSGGETSKEAATQEMKSLIDRQRQELLRLVLTREGSLLPKPCKELFWHMSTVLHLFYCKDDGFTSQDLIKVVNEVIHEPVVLN.

The Mg(2+) site is built by Asp-507 and Asp-511. A DDXXD motif motif is present at residues 507–511; the sequence is DDFFD. A helical transmembrane segment spans residues 606–622; the sequence is YVSFALGPIVLPCLYLV. Mg(2+) is bound by residues Asn-651, Thr-655, and Glu-659.

Belongs to the terpene synthase family. Mg(2+) serves as cofactor. In terms of tissue distribution, present in both leaves and flowers.

Its subcellular location is the plastid. It is found in the chloroplast membrane. It carries out the reaction ent-copalyl diphosphate = ent-kaur-16-ene + diphosphate. Its pathway is plant hormone biosynthesis; gibberellin biosynthesis. Involved in the biosynthesis of labdane-type diterpenoid including marrubiin and other labdane-related furanoid diterpenoids with potential applications as anti-diabetics, analgesics or vasorelaxants. Terpene synthase that produces ent-kaurene from ent-copalyl diphosphate (ent-CPP). This chain is Ent-kaurene synthase, chloroplastic, found in Marrubium vulgare (White horehound).